Here is an 807-residue protein sequence, read N- to C-terminus: PGC-1 and ERR-induced regulator in muscle protein 1 (807 aa).

Disordered regions lie at residues 29-80 (QADL…EDVA), 121-391 (CPGQ…TPAS), and 517-548 (PSHE…AGSR). Composition is skewed to low complexity over residues 40-52 (SSDI…SGSS) and 145-160 (PAPS…PESP). Polar residues predominate over residues 162-171 (HSDNPQSSPD). Residues 180–194 (PGRKKRRAVGAKGTK) show a composition bias toward basic residues. 3 stretches are compositionally biased toward polar residues: residues 195 to 211 (HSGS…SPQL), 311 to 346 (KPQS…STPA), and 363 to 391 (ALST…TPAS). Position 198 is a phosphoserine (Ser-198). Thr-534 carries the post-translational modification Phosphothreonine. Position 548 is an omega-N-methylarginine (Arg-548).

As to expression, highly expressed in skeletal muscles and heart with lower levels in brown adipose tissue (at protein level). Muscle-specific expression is increased by endurance exercise.

The protein resides in the cytoplasm. Its subcellular location is the nucleus. In terms of biological role, regulates the expression of selective PPARGC1A/B and ESRRA/B/G target genes with roles in glucose and lipid metabolism, energy transfer, contractile function, muscle mitochondrial biogenesis and oxidative capacity. Required for the efficient induction of MT-CO2, MT-CO3, COX4I1, TFB1M, TFB2M, POLRMT and SIRT3 by PPARGC1A. Positively regulates the PPARGC1A/ESRRG-induced expression of CKMT2, TNNI3 and SLC2A4 and negatively regulates the PPARGC1A/ESRRG-induced expression of PDK4. This chain is PGC-1 and ERR-induced regulator in muscle protein 1 (Perm1), found in Mus musculus (Mouse).